Consider the following 310-residue polypeptide: Nucleotide-binding protein Mmc1_3333 (310 aa).

Position 19 to 26 (19 to 26 (GLSGAGKS)) interacts with ATP.

This sequence belongs to the RapZ-like family.

Its function is as follows. Displays ATPase and GTPase activities. The chain is Nucleotide-binding protein Mmc1_3333 from Magnetococcus marinus (strain ATCC BAA-1437 / JCM 17883 / MC-1).